Here is a 310-residue protein sequence, read N- to C-terminus: Homoserine kinase (310 aa).

Position 91 to 101 (91 to 101 (PIGSGLGSSAC)) interacts with ATP.

The protein belongs to the GHMP kinase family. Homoserine kinase subfamily.

The protein resides in the cytoplasm. It catalyses the reaction L-homoserine + ATP = O-phospho-L-homoserine + ADP + H(+). Its pathway is amino-acid biosynthesis; L-threonine biosynthesis; L-threonine from L-aspartate: step 4/5. Its function is as follows. Catalyzes the ATP-dependent phosphorylation of L-homoserine to L-homoserine phosphate. The polypeptide is Homoserine kinase (Escherichia coli (strain K12 / MC4100 / BW2952)).